We begin with the raw amino-acid sequence, 362 residues long: Peptide chain release factor 1 (362 aa).

Residue Gln237 is modified to N5-methylglutamine. The segment at 289 to 308 (AAEISDTRRNLLGSGDRSDR) is disordered.

The protein belongs to the prokaryotic/mitochondrial release factor family. In terms of processing, methylated by PrmC. Methylation increases the termination efficiency of RF1.

It localises to the cytoplasm. Functionally, peptide chain release factor 1 directs the termination of translation in response to the peptide chain termination codons UAG and UAA. The polypeptide is Peptide chain release factor 1 (Vibrio cholerae serotype O1 (strain ATCC 39541 / Classical Ogawa 395 / O395)).